A 162-amino-acid polypeptide reads, in one-letter code: UPF0114 protein Sfri_3655 (162 aa).

Helical transmembrane passes span 15–35 (IMAP…IKFF), 53–73 (LVLI…LIMV), and 136–156 (IMWY…MGYL).

The protein belongs to the UPF0114 family.

The protein resides in the cell membrane. In Shewanella frigidimarina (strain NCIMB 400), this protein is UPF0114 protein Sfri_3655.